The sequence spans 338 residues: 1-aminocyclopropane-1-carboxylate deaminase (338 aa).

N6-(pyridoxal phosphate)lysine is present on lysine 51. Serine 78 functions as the Nucleophile in the catalytic mechanism.

Belongs to the ACC deaminase/D-cysteine desulfhydrase family. Homotrimer. The cofactor is pyridoxal 5'-phosphate.

It carries out the reaction 1-aminocyclopropane-1-carboxylate + H2O = 2-oxobutanoate + NH4(+). Its function is as follows. Catalyzes a cyclopropane ring-opening reaction, the irreversible conversion of 1-aminocyclopropane-1-carboxylate (ACC) to ammonia and alpha-ketobutyrate. Allows growth on ACC as a nitrogen source. This is 1-aminocyclopropane-1-carboxylate deaminase from Burkholderia cenocepacia (strain HI2424).